A 271-amino-acid chain; its full sequence is Zinc finger CCHC domain-containing protein 9 (271 aa).

The tract at residues 1–40 is disordered; it reads MTRWARVSTTYNKRPLPATSWEDMKKGSFEGTSQNLPKRK. At serine 48 the chain carries Phosphoserine. CCHC-type zinc fingers lie at residues 128–145, 155–172, 184–201, and 211–228; these read MVCF…DCPA, GICY…KCKA, AKCF…SCPD, and GGCK…DCPE.

The protein localises to the nucleus. Its subcellular location is the nucleolus. Its function is as follows. May down-regulate transcription mediated by NF-kappa-B and the serum response element. The polypeptide is Zinc finger CCHC domain-containing protein 9 (ZCCHC9) (Homo sapiens (Human)).